Consider the following 292-residue polypeptide: 33 kDa chaperonin (292 aa).

Disulfide bonds link Cys-238–Cys-240 and Cys-271–Cys-274.

This sequence belongs to the HSP33 family. In terms of processing, under oxidizing conditions two disulfide bonds are formed involving the reactive cysteines. Under reducing conditions zinc is bound to the reactive cysteines and the protein is inactive.

It localises to the cytoplasm. Its function is as follows. Redox regulated molecular chaperone. Protects both thermally unfolding and oxidatively damaged proteins from irreversible aggregation. Plays an important role in the bacterial defense system toward oxidative stress. This is 33 kDa chaperonin from Latilactobacillus sakei subsp. sakei (strain 23K) (Lactobacillus sakei subsp. sakei).